Here is a 332-residue protein sequence, read N- to C-terminus: MTVTANQVLRPRGPQIERLTDTRAKVVIEPLERGYGHTLGNALRRVLLSSIPGFAITEVEIDGVLHEYTTVEGLQEDVLEVLLNLKDVAIRMHSGDSATLSLSKQGPGVVTAADIKVDHNVEILNGDHVICHLTKDTAINMRLKIERGFGYQPAAARRRPDEETRAIGRLVLDASFSPVRRVAYAVEAARVEQRTDLDKLVIDIETNGTIDAEEAVRTAADILSDQLSVFGDFTHRDRGAAKPANNGVDPVLLRPIDDLELTVRSANCLKAESIYYIGDLIQKTEVELLKTPNLGKKSLTEIKEVLAQRGLSLGMKLENWPPAGVASHGMLG.

The tract at residues 1–234 (MTVTANQVLR…DQLSVFGDFT (234 aa)) is alpha N-terminal domain (alpha-NTD). The segment at 248–332 (VDPVLLRPID…AGVASHGMLG (85 aa)) is alpha C-terminal domain (alpha-CTD).

This sequence belongs to the RNA polymerase alpha chain family. Homodimer. The RNAP catalytic core consists of 2 alpha, 1 beta, 1 beta' and 1 omega subunit. When a sigma factor is associated with the core the holoenzyme is formed, which can initiate transcription.

The catalysed reaction is RNA(n) + a ribonucleoside 5'-triphosphate = RNA(n+1) + diphosphate. Functionally, DNA-dependent RNA polymerase catalyzes the transcription of DNA into RNA using the four ribonucleoside triphosphates as substrates. This chain is DNA-directed RNA polymerase subunit alpha, found in Stenotrophomonas maltophilia (strain K279a).